The following is a 740-amino-acid chain: Homeobox protein 4 (740 aa).

Residues 1–13 (MNTVEENNTKITD) show a composition bias toward polar residues. 2 disordered regions span residues 1–41 (MNTV…ENLS) and 179–491 (NNNN…NNEI). 4 stretches are compositionally biased toward low complexity: residues 14–34 (NNNN…NNKN), 179–241 (NNNN…PQQN), 251–288 (NNNN…NNNN), and 303–316 (STTD…SVPS). The stretch at 254-287 (NINNNNINKNNNNYNNNNNNKNNNNNNNNNNNNN) forms a coiled coil. The span at 317 to 328 (NKKKSSKTKQKS) shows a compositional bias: basic residues. Positions 339–363 (HKSNYHQQPNQNSQHLQSKPNSPIL) are enriched in polar residues. 2 stretches are compositionally biased toward low complexity: residues 365-390 (SSPL…SPPQ) and 397-491 (NNNF…NNEI). The stretch at 472–500 (NTNTNNNNNKNNNNNNNNEIENNNNEELI) forms a coiled coil. The homeobox DNA-binding region spans 605 to 667 (RPKKGAKLSK…NTRRRKVPTL (63 aa)). The segment covering 686-722 (NNNNNNGGNSNFKNNNNNTITTTSTSNNNNNNNNNNH) has biased composition (low complexity). Positions 686 to 740 (NNNNNNGGNSNFKNNNNNTITTTSTSNNNNNNNNNNHNEMECDDGENEESSEYDD) are disordered. Residues 726 to 740 (ECDDGENEESSEYDD) show a composition bias toward acidic residues.

The protein resides in the nucleus. Its function is as follows. Putative transcription factor. The polypeptide is Homeobox protein 4 (hbx4) (Dictyostelium discoideum (Social amoeba)).